Consider the following 445-residue polypeptide: 3-phosphoshikimate 1-carboxyvinyltransferase (445 aa).

3-phosphoshikimate contacts are provided by Lys-28, Ser-29, and Arg-33. Lys-28 provides a ligand contact to phosphoenolpyruvate. Positions 101 and 129 each coordinate phosphoenolpyruvate. The 3-phosphoshikimate site is built by Ser-175, Gln-177, Asp-328, and Lys-355. Phosphoenolpyruvate is bound at residue Gln-177. Residue Asp-328 is the Proton acceptor of the active site. Residues Arg-359 and Arg-402 each contribute to the phosphoenolpyruvate site.

It belongs to the EPSP synthase family. As to quaternary structure, monomer.

It is found in the cytoplasm. The catalysed reaction is 3-phosphoshikimate + phosphoenolpyruvate = 5-O-(1-carboxyvinyl)-3-phosphoshikimate + phosphate. Its pathway is metabolic intermediate biosynthesis; chorismate biosynthesis; chorismate from D-erythrose 4-phosphate and phosphoenolpyruvate: step 6/7. Its function is as follows. Catalyzes the transfer of the enolpyruvyl moiety of phosphoenolpyruvate (PEP) to the 5-hydroxyl of shikimate-3-phosphate (S3P) to produce enolpyruvyl shikimate-3-phosphate and inorganic phosphate. The polypeptide is 3-phosphoshikimate 1-carboxyvinyltransferase (Bradyrhizobium sp. (strain BTAi1 / ATCC BAA-1182)).